The primary structure comprises 49 residues: Large ribosomal subunit protein bL33B (49 aa).

It belongs to the bacterial ribosomal protein bL33 family.

This Geobacillus kaustophilus (strain HTA426) protein is Large ribosomal subunit protein bL33B.